The primary structure comprises 836 residues: Protein translocase subunit SecA (836 aa).

ATP is bound by residues glutamine 85, 103-107 (GEGKT), and aspartate 492. Positions 820, 822, 831, and 832 each coordinate Zn(2+).

Belongs to the SecA family. As to quaternary structure, monomer and homodimer. Part of the essential Sec protein translocation apparatus which comprises SecA, SecYEG and auxiliary proteins SecDF. Other proteins may also be involved. Zn(2+) serves as cofactor.

It is found in the cell membrane. The protein localises to the cytoplasm. It catalyses the reaction ATP + H2O + cellular proteinSide 1 = ADP + phosphate + cellular proteinSide 2.. Part of the Sec protein translocase complex. Interacts with the SecYEG preprotein conducting channel. Has a central role in coupling the hydrolysis of ATP to the transfer of proteins into and across the cell membrane, serving as an ATP-driven molecular motor driving the stepwise translocation of polypeptide chains across the membrane. In Clostridium botulinum (strain Alaska E43 / Type E3), this protein is Protein translocase subunit SecA.